The following is a 232-amino-acid chain: 7-cyano-7-deazaguanine synthase (232 aa).

7 to 17 is an ATP binding site; that stretch reads CSGGLDSVSLA. 4 residues coordinate Zn(2+): Cys-185, Cys-193, Cys-196, and Cys-199.

This sequence belongs to the QueC family. Zn(2+) is required as a cofactor.

The enzyme catalyses 7-carboxy-7-deazaguanine + NH4(+) + ATP = 7-cyano-7-deazaguanine + ADP + phosphate + H2O + H(+). Its pathway is purine metabolism; 7-cyano-7-deazaguanine biosynthesis. Its function is as follows. Catalyzes the ATP-dependent conversion of 7-carboxy-7-deazaguanine (CDG) to 7-cyano-7-deazaguanine (preQ(0)). The protein is 7-cyano-7-deazaguanine synthase of Brucella abortus (strain S19).